The sequence spans 449 residues: Exodeoxyribonuclease 7 large subunit (449 aa).

The protein belongs to the XseA family. As to quaternary structure, heterooligomer composed of large and small subunits.

It localises to the cytoplasm. The enzyme catalyses Exonucleolytic cleavage in either 5'- to 3'- or 3'- to 5'-direction to yield nucleoside 5'-phosphates.. In terms of biological role, bidirectionally degrades single-stranded DNA into large acid-insoluble oligonucleotides, which are then degraded further into small acid-soluble oligonucleotides. The chain is Exodeoxyribonuclease 7 large subunit from Lacticaseibacillus casei (strain BL23) (Lactobacillus casei).